The primary structure comprises 171 residues: MGWLSSIFWAFWYILPAYFANASPVLVGGGRPIDGGRVWRDGRRLLGDGKTWRGFIGGVLIGTLVGIVQYFITPDFYGSLETAVKLAFLLSFGALIGDLVGSFIKRRANLPRGYPAIGLDQLGFLISALAFAYPVKTLSSGQIIFLLVVSPFIHWGANYFAYRMGWKSVPW.

The next 5 membrane-spanning stretches (helical) occupy residues 7–27 (IFWA…PVLV), 54–74 (GFIG…FITP), 84–104 (VKLA…GSFI), 115–135 (PAIG…AYPV), and 141–161 (GQII…NYFA).

This sequence belongs to the CDP-archaeol synthase family. Mg(2+) is required as a cofactor.

The protein resides in the cell membrane. It carries out the reaction 2,3-bis-O-(geranylgeranyl)-sn-glycerol 1-phosphate + CTP + H(+) = CDP-2,3-bis-O-(geranylgeranyl)-sn-glycerol + diphosphate. The protein operates within membrane lipid metabolism; glycerophospholipid metabolism. Functionally, catalyzes the formation of CDP-2,3-bis-(O-geranylgeranyl)-sn-glycerol (CDP-archaeol) from 2,3-bis-(O-geranylgeranyl)-sn-glycerol 1-phosphate (DGGGP) and CTP. This reaction is the third ether-bond-formation step in the biosynthesis of archaeal membrane lipids. The protein is CDP-archaeol synthase of Thermococcus kodakarensis (strain ATCC BAA-918 / JCM 12380 / KOD1) (Pyrococcus kodakaraensis (strain KOD1)).